Here is a 181-residue protein sequence, read N- to C-terminus: Adenine phosphoribosyltransferase (181 aa).

The protein belongs to the purine/pyrimidine phosphoribosyltransferase family. As to quaternary structure, homodimer.

The protein resides in the cytoplasm. It catalyses the reaction AMP + diphosphate = 5-phospho-alpha-D-ribose 1-diphosphate + adenine. It participates in purine metabolism; AMP biosynthesis via salvage pathway; AMP from adenine: step 1/1. Functionally, catalyzes a salvage reaction resulting in the formation of AMP, that is energically less costly than de novo synthesis. This chain is Adenine phosphoribosyltransferase, found in Mesorhizobium japonicum (strain LMG 29417 / CECT 9101 / MAFF 303099) (Mesorhizobium loti (strain MAFF 303099)).